Reading from the N-terminus, the 401-residue chain is NADH-quinone oxidoreductase subunit D (401 aa).

Belongs to the complex I 49 kDa subunit family. As to quaternary structure, NDH-1 is composed of 15 different subunits. Subunits NuoB, C, D, E, F, and G constitute the peripheral sector of the complex.

It is found in the cell membrane. The enzyme catalyses a quinone + NADH + 5 H(+)(in) = a quinol + NAD(+) + 4 H(+)(out). Its function is as follows. NDH-1 shuttles electrons from NADH, via FMN and iron-sulfur (Fe-S) centers, to quinones in the respiratory chain. The immediate electron acceptor for the enzyme in this species is believed to be a menaquinone. Couples the redox reaction to proton translocation (for every two electrons transferred, four hydrogen ions are translocated across the cytoplasmic membrane), and thus conserves the redox energy in a proton gradient. This Deinococcus radiodurans (strain ATCC 13939 / DSM 20539 / JCM 16871 / CCUG 27074 / LMG 4051 / NBRC 15346 / NCIMB 9279 / VKM B-1422 / R1) protein is NADH-quinone oxidoreductase subunit D.